A 434-amino-acid polypeptide reads, in one-letter code: Chaperone SurA (434 aa).

The first 22 residues, 1–22, serve as a signal peptide directing secretion; it reads MKPSKHLIFALFALAISQPTMA. PpiC domains are found at residues 173-274 and 283-383; these read DVEY…KIMD and IEEV…QLEE.

It is found in the periplasm. The catalysed reaction is [protein]-peptidylproline (omega=180) = [protein]-peptidylproline (omega=0). Its function is as follows. Chaperone involved in the correct folding and assembly of outer membrane proteins. Recognizes specific patterns of aromatic residues and the orientation of their side chains, which are found more frequently in integral outer membrane proteins. May act in both early periplasmic and late outer membrane-associated steps of protein maturation. The sequence is that of Chaperone SurA from Shewanella oneidensis (strain ATCC 700550 / JCM 31522 / CIP 106686 / LMG 19005 / NCIMB 14063 / MR-1).